Here is a 56-residue protein sequence, read N- to C-terminus: Conotoxin Cal6.41c (56 aa).

The signal sequence occupies residues 1-23 (MSGSGAMLLGLLILVAMATSLDT). Intrachain disulfides connect cysteine 27–cysteine 41, cysteine 33–cysteine 50, and cysteine 40–cysteine 54.

In terms of tissue distribution, expressed by the venom duct.

The protein resides in the secreted. Probable neurotoxin. In Californiconus californicus (California cone), this protein is Conotoxin Cal6.41c.